Here is an 810-residue protein sequence, read N- to C-terminus: Volume-regulated anion channel subunit LRRC8A (810 aa).

Met-1 is modified (N-acetylmethionine). Residues 1–23 (MIPVTELRYFADTQPAYRILKPW) are Cytoplasmic-facing. Residues 24 to 47 (WDVFTDYISIVMLMIAVFGGTLQV) traverse the membrane as a helical segment. Topologically, residues 48-123 (TQDKMICLPC…YENRLHWFAK (76 aa)) are extracellular. Intrachain disulfides connect Cys-54–Cys-310, Cys-57–Cys-65, and Cys-113–Cys-295. 2 N-linked (GlcNAc...) asparagine glycosylation sites follow: Asn-66 and Asn-83. The helical transmembrane segment at 124–142 (YFPYLVLLHTLIFLACSNF) threads the bilayer. Topologically, residues 143 to 264 (WFKFPRTSSK…EEGDIVYRLY (122 aa)) are cytoplasmic. Thr-200 bears the Phosphothreonine mark. Ser-202 bears the Phosphoserine mark. Thr-215 carries the phosphothreonine modification. A Phosphoserine modification is found at Ser-217. The chain crosses the membrane as a helical span at residues 265–286 (MRQTIIKVIKFILIICYTVYYV). Topologically, residues 287 to 316 (HNIKFDVDCTVDIESLTGYRTYRCAHPLAT) are extracellular. A helical transmembrane segment spans residues 317-341 (LFKILASFYISLVIFYGLICMYTLW). Over 342–810 (WMLRRSLKKY…RLWRADKEQA (469 aa)) the chain is Cytoplasmic. LRR repeat units lie at residues 399–422 (ENKL…RLTK), 423–445 (NAQD…VFDL), 447–468 (ELEV…IAQL), 469–492 (TGLK…AFLR), 493–515 (ENLR…IYSL), 518–542 (LEEL…GLRE), 543–565 (LKRL…VTDV), 567–589 (VHLQ…SLKK), 590–613 (MANL…IFSL), 615–637 (NLQE…SFQH), 639–661 (HRLT…IGNL), 662–684 (TNLE…LFYC), 686–707 (KLRY…IGLL), 708–730 (QNLQ…LFQC), 732–753 (KLRA…VGEL), 754–776 (TNLT…LGEC), and 778–801 (LLKR…VKER). Residues 706–707 (LL) carry the Di-leucine motif motif.

This sequence belongs to the LRRC8 family. Heterohexamer; oligomerizes with other LRRC8 proteins (LRRC8B, LRRC8C, LRRC8D and/or LRRC8E) to form a heterohexamer. Can form homohexamers in vitro, but these have lower conductance than heterohexamers. In vivo, the subunit composition may depend primarily on expression levels, and heterooligomeric channels containing various proportions of the different LRRC8 proteins may coexist. Interact with GRB2. Interacts with NOX4; this interaction prevents the ubiquitin-mediated degradation of LRRC8A. In terms of processing, N-glycosylated. In terms of tissue distribution, expressed in brain, kidney, ovary, lung, liver, heart, and fetal brain and liver. Found at high levels in bone marrow; lower levels are detected in peripheral blood cells. Expressed on T-cells as well as on B-lineage cells.

Its subcellular location is the cell membrane. It localises to the lysosome membrane. The enzyme catalyses chloride(in) = chloride(out). It carries out the reaction iodide(out) = iodide(in). It catalyses the reaction taurine(out) = taurine(in). The catalysed reaction is L-aspartate(out) = L-aspartate(in). The enzyme catalyses L-glutamate(out) = L-glutamate(in). It carries out the reaction myo-inositol(out) = myo-inositol(in). It catalyses the reaction 2',3'-cGAMP(out) = 2',3'-cGAMP(in). Inhibited by (4-[(2-butyl-6,7-dichloro-2-cyclopentyl-2,3-dihydro-1-oxo-1H-inden-5-yl)oxy]butanoic acid), which plugs the channel like a cork in a bottle by binding in the extracellular selectivity filter and sterically occluding ion conduction. Lipids may block conduction in closed heterohexameric channels. Essential component of the volume-regulated anion channel (VRAC, also named VSOAC channel), an anion channel required to maintain a constant cell volume in response to extracellular or intracellular osmotic changes. The VRAC channel conducts iodide better than chloride and can also conduct organic osmolytes like taurine. Mediates efflux of amino acids, such as aspartate and glutamate, in response to osmotic stress. LRRC8A and LRRC8D are required for the uptake of the drug cisplatin. In complex with LRRC8C or LRRC8E, acts as a transporter of immunoreactive cyclic dinucleotide GMP-AMP (2'-3'-cGAMP), an immune messenger produced in response to DNA virus in the cytosol: mediates both import and export of 2'-3'-cGAMP, thereby promoting transfer of 2'-3'-cGAMP to bystander cells. In contrast, complexes containing LRRC8D inhibit transport of 2'-3'-cGAMP. Required for in vivo channel activity, together with at least one other family member (LRRC8B, LRRC8C, LRRC8D or LRRC8E); channel characteristics depend on the precise subunit composition. Can form functional channels by itself (in vitro). Involved in B-cell development: required for the pro-B cell to pre-B cell transition. Also required for T-cell development. Required for myoblast differentiation: VRAC activity promotes membrane hyperpolarization and regulates insulin-stimulated glucose metabolism and oxygen consumption. Also acts as a regulator of glucose-sensing in pancreatic beta cells: VRAC currents, generated in response to hypotonicity- or glucose-induced beta cell swelling, depolarize cells, thereby causing electrical excitation, leading to increase glucose sensitivity and insulin secretion. Also plays a role in lysosome homeostasis by forming functional lysosomal VRAC channels in response to low cytoplasmic ionic strength condition: lysosomal VRAC channels are necessary for the formation of large lysosome-derived vacuoles, which store and then expel excess water to maintain cytosolic water homeostasis. Acts as a key factor in NLRP3 inflammasome activation by modulating itaconate efflux and mitochondria function. The chain is Volume-regulated anion channel subunit LRRC8A from Homo sapiens (Human).